Consider the following 84-residue polypeptide: Small ribosomal subunit protein bS16 (84 aa).

This sequence belongs to the bacterial ribosomal protein bS16 family.

The chain is Small ribosomal subunit protein bS16 from Burkholderia mallei (strain NCTC 10247).